We begin with the raw amino-acid sequence, 548 residues long: Glucan 1,4-alpha-maltotetraohydrolase (548 aa).

An N-terminal signal peptide occupies residues 1–21 (MSHILRAAVLAAMLLPLPSMA). Residues Asp22, Gln23, His34, Asp37, and Glu38 each contribute to the Ca(2+) site. 99–100 (YF) is a binding site for substrate. Residue Asn137 coordinates Ca(2+). Residue His138 participates in substrate binding. Cys161 and Cys171 are disulfide-bonded. Positions 172 and 175 each coordinate Ca(2+). 177–181 (FIGGD) is a substrate binding site. Asp183 contacts Ca(2+). Residue Arg212 coordinates substrate. Asp214 functions as the Nucleophile in the catalytic mechanism. 217–218 (RG) serves as a coordination point for substrate. Gly218 contributes to the Ca(2+) binding site. A disulfide bridge links Cys237 with Cys272. Catalysis depends on Glu240, which acts as the Proton donor. Residues His314 and Gln326 each contribute to the substrate site. A CBM20 domain is found at 446–548 (GEPGALVSVS…SEGATTVGRL (103 aa)). The segment covering 529 to 542 (QGGANNSLTPSEGA) has biased composition (polar residues). Positions 529–548 (QGGANNSLTPSEGATTVGRL) are disordered.

Belongs to the glycosyl hydrolase 13 family. As to quaternary structure, monomer. Requires Ca(2+) as cofactor.

The protein localises to the secreted. It carries out the reaction Hydrolysis of (1-&gt;4)-alpha-D-glucosidic linkages in amylaceous polysaccharides, to remove successive maltotetraose residues from the non-reducing chain ends.. It functions in the pathway glycan degradation; starch degradation. The chain is Glucan 1,4-alpha-maltotetraohydrolase (amyP) from Stutzerimonas stutzeri (Pseudomonas stutzeri).